Consider the following 1023-residue polypeptide: Presequence protease, mitochondrial (1023 aa).

A mitochondrion-targeting transit peptide spans 1–62 (MFRQSKTIIT…PDLFLTAVKL (62 aa)). His99 is a binding site for Zn(2+). The active-site Proton acceptor is Glu102. His103 and Glu200 together coordinate Zn(2+). Cys114 and Cys551 form a disulfide bridge.

The protein belongs to the peptidase M16 family. PreP subfamily. As to quaternary structure, monomer and homodimer; homodimerization is induced by binding of the substrate. Zn(2+) is required as a cofactor. A disulfide bond locks the enzyme in the closed conformation preventing substrate entry into the catalytic chamber.

It localises to the mitochondrion matrix. Its activity is regulated as follows. Mainly exists in a closed and catalytically competent conformation but a closed-to-open switch allows substrate entry into the catalytic chamber. Substrate binding induces closure and dimerization. A disulfide bond may lock the enzyme in a closed conformation preventing substrate entry into the catalytic chamber, participating in redox regulation of the enzyme. Inhibited by metal-chelating agents. Inhibited by nickel and zinc excess, and slightly activated by manganese. In terms of biological role, metalloendopeptidase of the mitochondrial matrix that functions in peptide cleavage and degradation rather than in protein processing. Has an ATP-independent activity. Specifically cleaves peptides in the range of 5 to 65 residues. Shows a preference for cleavage after small polar residues and before basic residues, but without any positional preference. Degrades the transit peptides of mitochondrial proteins after their cleavage. Also degrades other unstructured peptides. This is Presequence protease, mitochondrial (pitrm1) from Danio rerio (Zebrafish).